The primary structure comprises 958 residues: Probable transport protein MmpL1 (958 aa).

12 helical membrane passes run 19–39 (ALSL…NVVA), 192–212 (SLHT…FIAY), 216–236 (SAAL…RGII), 252–272 (VNVL…FLVG), 295–315 (TAHV…CLGF), 329–349 (AIGL…IIAV), 377–397 (WPGP…LALP), 762–782 (YDVM…MLGI), 791–811 (VIVG…VLIW), 814–834 (ILHM…MLAV), 868–888 (VVTI…ASDL), and 906–927 (TLVV…WFWW).

It belongs to the resistance-nodulation-cell division (RND) (TC 2.A.6) family. MmpL subfamily.

The protein localises to the cell membrane. This chain is Probable transport protein MmpL1 (mmpL1), found in Mycobacterium tuberculosis (strain CDC 1551 / Oshkosh).